The primary structure comprises 146 residues: Snaclec 4 (146 aa).

Residues 1–23 form the signal peptide; it reads MGRFISISFGLLVVFLSLSGTEA. Intrachain disulfides connect Cys-27–Cys-38, Cys-55–Cys-144, and Cys-121–Cys-136. Positions 34 to 145 constitute a C-type lectin domain; the sequence is YDQNCYKVFT…CNFIAPVVCK (112 aa).

The protein belongs to the snaclec family. In terms of assembly, heterodimer; disulfide-linked.

It localises to the secreted. In terms of biological role, interferes with one step of hemostasis (modulation of platelet aggregation, or coagulation cascade, for example). This chain is Snaclec 4, found in Daboia siamensis (Eastern Russel's viper).